A 375-amino-acid chain; its full sequence is Putative nuclease YhcG (375 aa).

As to quaternary structure, interacts with DNA processing enzymes, including the restriction complex HsdMRS, the integrases IntF and IntS, and the recombinase PinE.

May be a nuclease involved in DNA recombination and repair. This chain is Putative nuclease YhcG (yhcG), found in Escherichia coli (strain K12).